The following is a 483-amino-acid chain: 6-phosphogluconate dehydrogenase, decarboxylating (483 aa).

Residues 10–15 (GLAVMG) and 33–35 (NRT) each bind NADP(+). Lys38 carries the post-translational modification N6-acetyllysine. Ser57 carries the post-translational modification Phosphoserine. Lys59 is subject to N6-acetyllysine. NADP(+) is bound by residues 75 to 77 (VKA) and Asn103. Residues Asn103 and 129 to 131 (SGG) contribute to the substrate site. Ser129 carries the post-translational modification Phosphoserine. Residue Lys184 is the Proton acceptor of the active site. Substrate is bound at residue 187–188 (HN). Catalysis depends on Glu191, which acts as the Proton donor. Substrate is bound by residues Tyr192, Lys261, and Arg288. N6-acetyllysine is present on Lys309. Arg447 and His453 together coordinate substrate. An NADP(+)-binding site is contributed by 478 to 481 (SSSY).

Belongs to the 6-phosphogluconate dehydrogenase family. Homodimer.

It is found in the cytoplasm. It catalyses the reaction 6-phospho-D-gluconate + NADP(+) = D-ribulose 5-phosphate + CO2 + NADPH. It participates in carbohydrate degradation; pentose phosphate pathway; D-ribulose 5-phosphate from D-glucose 6-phosphate (oxidative stage): step 3/3. Catalyzes the oxidative decarboxylation of 6-phosphogluconate to ribulose 5-phosphate and CO(2), with concomitant reduction of NADP to NADPH. The chain is 6-phosphogluconate dehydrogenase, decarboxylating (PGD) from Homo sapiens (Human).